The chain runs to 336 residues: tRNA(Ile)-lysidine synthase (336 aa).

21 to 26 provides a ligand contact to ATP; sequence SGGLDS.

This sequence belongs to the tRNA(Ile)-lysidine synthase family.

It is found in the cytoplasm. The catalysed reaction is cytidine(34) in tRNA(Ile2) + L-lysine + ATP = lysidine(34) in tRNA(Ile2) + AMP + diphosphate + H(+). Functionally, ligates lysine onto the cytidine present at position 34 of the AUA codon-specific tRNA(Ile) that contains the anticodon CAU, in an ATP-dependent manner. Cytidine is converted to lysidine, thus changing the amino acid specificity of the tRNA from methionine to isoleucine. This is tRNA(Ile)-lysidine synthase from Helicobacter pylori (strain ATCC 700392 / 26695) (Campylobacter pylori).